The following is a 131-amino-acid chain: Neurophysin 2 (131 aa).

Disulfide bonds link cysteine 10–cysteine 55, cysteine 13–cysteine 27, cysteine 21–cysteine 45, cysteine 28–cysteine 35, cysteine 62–cysteine 74, cysteine 68–cysteine 86, and cysteine 75–cysteine 80.

Belongs to the vasopressin/oxytocin family.

Its subcellular location is the secreted. Functionally, neurophysin 2 specifically binds vasopressin. This Anser anser anser (Western greylag goose) protein is Neurophysin 2.